Reading from the N-terminus, the 400-residue chain is Argininosuccinate synthase (400 aa).

ATP-binding positions include 11–19 and Ala-38; that span reads AYSGGLDTS. 2 residues coordinate L-citrulline: Tyr-89 and Ser-94. Residue Gly-119 coordinates ATP. The L-aspartate site is built by Thr-121, Asn-125, and Asp-126. Asn-125 provides a ligand contact to L-citrulline. L-citrulline is bound by residues Arg-129, Ser-178, Ser-187, Glu-263, and Tyr-275.

The protein belongs to the argininosuccinate synthase family. Type 1 subfamily. In terms of assembly, homotetramer.

It is found in the cytoplasm. It catalyses the reaction L-citrulline + L-aspartate + ATP = 2-(N(omega)-L-arginino)succinate + AMP + diphosphate + H(+). Its pathway is amino-acid biosynthesis; L-arginine biosynthesis; L-arginine from L-ornithine and carbamoyl phosphate: step 2/3. The chain is Argininosuccinate synthase from Desulfatibacillum aliphaticivorans.